A 202-amino-acid polypeptide reads, in one-letter code: Large ribosomal subunit protein uL4 (202 aa).

Positions 42-52 (GTKAQKSRSQV) are enriched in polar residues. The segment at 42–70 (GTKAQKSRSQVSGTTKKSKKQKGGGARHG) is disordered.

The protein belongs to the universal ribosomal protein uL4 family. In terms of assembly, part of the 50S ribosomal subunit.

Functionally, one of the primary rRNA binding proteins, this protein initially binds near the 5'-end of the 23S rRNA. It is important during the early stages of 50S assembly. It makes multiple contacts with different domains of the 23S rRNA in the assembled 50S subunit and ribosome. Forms part of the polypeptide exit tunnel. This is Large ribosomal subunit protein uL4 from Xylella fastidiosa (strain 9a5c).